A 371-amino-acid chain; its full sequence is Transcription factor bHLH77 (371 aa).

Disordered regions lie at residues 1-25 (MNMD…FGNG), 65-206 (SGGI…SLAE), and 352-371 (QSNN…KLEP). Residues 85 to 96 (SQPTTQESNKSS) are compositionally biased toward polar residues. The span at 128–142 (SPASSSLTASNSKVS) shows a compositional bias: low complexity. Positions 165-190 (GVEKCDSKGDNKDDAKPPEAPKDYIH) are enriched in basic and acidic residues. Residues 197-247 (QATDSHSLAERARREKISERMTLLQDLVPGCNRITGKAVMLDEIINYVQSL) enclose the bHLH domain.

As to quaternary structure, homodimer. Interacts with IBH1. In terms of tissue distribution, expressed constitutively in roots, leaves, stems, and flowers.

It localises to the nucleus. This Arabidopsis thaliana (Mouse-ear cress) protein is Transcription factor bHLH77 (BHLH77).